Reading from the N-terminus, the 600-residue chain is MTTSESSATSSVKIYFRLLSYVRPYVGIFLLSIIGFVIFASTQPMLAGILKYFVDGLTNPEAVLFPNVPYLRELQLLQAVPLLIVLIAAWQGLGSFLGNYFLAKVSLGLVHDLRVELFNKLLVLPNRYFDTTNSGHLISRITFNVTMVTGAATDAIKVVIREGLTVVFLFIYLLMMNWKLTLVMLAILPLIAVMVGTASKKFRKQSKKIQVAMGDVTHVASETIQGYRVVRSFGGEAYEQARFAQASNSNTQKQLRMTKTGAIYTPMLQLVIYSAMAVLMFLVLFLRGEATAGDLVAYITAAGLLPKPIRQLSEVSSTIQKGVAGAESIFEQLDVEEEVDTGTIERERVTGHLEVKNLSFFYPQTARQVLNDISFSAAPGQMIALVGRSGSGKSTLANLIPRFYGHDIGNILLDGVEINDYRLRNLRRHIAQVNQNVTLFNDTIANNIAYGDLAGAPRADIEAAAADAYAREFIDQLPQGFDTQVGENGVLLSGGQRQRLAIARALLKNAPLLILDEATSALDTESERHIQAALDHVMKGRTTLVIAHRLSTIEKADLILVMDAGQIVERGTHTELLAQNGYYARLHAMGLDEPAPVGAV.

The next 4 helical transmembrane spans lie at Val-26 to Leu-46, Leu-82 to Leu-102, Val-167 to Ile-187, and Pro-266 to Leu-286. Residues Leu-30–Lys-321 enclose the ABC transmembrane type-1 domain. The ABC transporter domain maps to Leu-353–Met-589. Gly-387–Ser-394 contacts ATP.

It belongs to the ABC transporter superfamily. Lipid exporter (TC 3.A.1.106) family. As to quaternary structure, homodimer.

Its subcellular location is the cell inner membrane. It carries out the reaction ATP + H2O + lipid A-core oligosaccharideSide 1 = ADP + phosphate + lipid A-core oligosaccharideSide 2.. In terms of biological role, involved in lipopolysaccharide (LPS) biosynthesis. Translocates lipid A-core from the inner to the outer leaflet of the inner membrane. Transmembrane domains (TMD) form a pore in the inner membrane and the ATP-binding domain (NBD) is responsible for energy generation. The protein is ATP-dependent lipid A-core flippase of Pseudomonas syringae pv. syringae (strain B728a).